The chain runs to 312 residues: Olfactory receptor 6C1 (312 aa).

Residues 1–23 are Extracellular-facing; it reads MRNHTEITEFILLGLTDDPNFQV. Asparagine 3 carries N-linked (GlcNAc...) asparagine glycosylation. A helical transmembrane segment spans residues 24–44; the sequence is VIFVFLLITYMLSITGNLTLI. The Cytoplasmic segment spans residues 45-52; it reads TITLLDSH. A helical transmembrane segment spans residues 53–73; the sequence is LQTPMYFFLRNFSILEISFTT. At 74 to 97 the chain is on the extracellular side; that stretch reads VSIPKFLGNIISGDKTISFNNCIV. Residues cysteine 95 and cysteine 187 are joined by a disulfide bond. The helical transmembrane segment at 98-118 threads the bilayer; it reads QLFFFILLGVTEFYLLAAMSY. Residues 119-137 are Cytoplasmic-facing; it reads DRYVAICKPLHCLSIMNRR. Residues 138–158 form a helical membrane-spanning segment; it reads VCTLLVFTSWLVSFLIIFPAL. Residues 159–195 lie on the Extracellular side of the membrane; that stretch reads MLLLKLHYCRSNIIDHFTCDYFPLLQLACSDTKFLEV. Residues 196–215 traverse the membrane as a helical segment; sequence MGFSCAAFTLMFTLALIFLS. At 216 to 235 the chain is on the cytoplasmic side; sequence YIYIIRTILRIPSTSQRTKA. A helical membrane pass occupies residues 236–256; that stretch reads FSTCSSHMVVVSISYGSCIFM. Topologically, residues 257–269 are extracellular; it reads YIKPSAKDRVSLS. A helical membrane pass occupies residues 270–290; it reads KGVAILNTSVAPMMNPFIYSL. Residues 291–312 lie on the Cytoplasmic side of the membrane; that stretch reads RNQQVKQAFINMARKTVFFTST.

Belongs to the G-protein coupled receptor 1 family.

The protein localises to the cell membrane. In terms of biological role, odorant receptor. The chain is Olfactory receptor 6C1 (OR6C1) from Homo sapiens (Human).